The sequence spans 415 residues: Sphingomyelin synthase-related protein 1 (415 aa).

Residues 12 to 78 form the SAM domain; sequence WTTKHVAVWL…MLSVRKLQKI (67 aa). Transmembrane regions (helical) follow at residues 153–173, 201–221, 232–252, and 277–297; these read ILSC…MVIV, FAMT…VLLL, LCSL…VTSL, and FAIW…GDYM. His301 is a catalytic residue. A helical membrane pass occupies residues 322 to 342; sequence FLHTLSWVLNLFGIFFILAAH. Active-site residues include His344 and Asp348. The chain crosses the membrane as a helical span at residues 347–367; it reads IDVFIAFYITTRLFLYYHTLA. Over 368-415 the chain is Cytoplasmic; the sequence is NTRAYQQSRRARIWFPMFSFFECNVNGTVPNEYCWPFSKPAIMKRLIG.

Belongs to the sphingomyelin synthase family.

It is found in the endoplasmic reticulum membrane. It catalyses the reaction an N-acylsphing-4-enine + a 1,2-diacyl-sn-glycero-3-phosphoethanolamine = an N-acylsphing-4-enine 1-phosphoethanolamine + a 1,2-diacyl-sn-glycerol. It carries out the reaction an N-acylsphinganine + a 1,2-diacyl-sn-glycero-3-phosphoethanolamine = an N-acylsphinganine-1-phosphoethanolamine + a 1,2-diacyl-sn-glycerol. The catalysed reaction is an N-acyl-(4R)-4-hydroxysphinganine + a 1,2-diacyl-sn-glycero-3-phosphoethanolamine = an N-acyl-(4R)-4-hydroxysphinganine-1-phosphoethanolamine + a 1,2-diacyl-sn-glycerol. The enzyme catalyses N-hexadecanoylsphinganine + a 1,2-diacyl-sn-glycero-3-phosphoethanolamine = N-hexadecanoyl-sphinganine-1-phosphoethanolamine + a 1,2-diacyl-sn-glycerol. It catalyses the reaction N-hexadecanoyl-(4R)-hydroxysphinganine + a 1,2-diacyl-sn-glycero-3-phosphoethanolamine = N-hexadecanoyl-(4R)-hydroxysphinganine-1-phosphoethanolamine + a 1,2-diacyl-sn-glycerol. The protein operates within sphingolipid metabolism. Synthesizes sphingolipids through transfer of a phosphatidyl head group from a glycerophospholipid on to the primary hydroxyl of a ceramide in the lumen of the endoplasmic reticulum. Catalyzes the synthesis of ceramide phosphoethanolamines (CPEs) (such as N-acylsphing-4-enine 1-phosphoethanolamine) by transferring phosphoethanolamine head group, which is smaller and more hydrophilic than the phosphocholine (PC) headgroup transferred in the canonical sphingomyelin synthesis (SMS) reaction by SMS1 or SMS2, from a phosphatidylethanolamine (1,2-diacyl-sn-glycero-3-phosphoethanolamine, PE) to a ceramide (such as N-acylsphing-4-enine). The larger PC prevents an efficient fit in the enzyme's catalytic pocket, leading to little or no SMS activity. In vitro, in the absence of ceramide, it has PLC activity with preference for phosphatidylinositol and phosphatidic acid, but also hydrolyzes phosphatidylethanolamine. The sequence is that of Sphingomyelin synthase-related protein 1 from Homo sapiens (Human).